An 820-amino-acid chain; its full sequence is Phenylalanine--tRNA ligase beta subunit (820 aa).

The region spanning 39–150 (PAPVGGVLLV…GTAAPGTPLR (112 aa)) is the tRNA-binding domain. In terms of domain architecture, B5 spans 435–510 (EVPQTITTTG…RLHGFTELPE (76 aa)). Mg(2+) contacts are provided by aspartate 488, aspartate 494, glutamate 497, and glutamate 498. The FDX-ACB domain maps to 727 to 818 (SRAPAAWRDL…AVKARGWAIR (92 aa)).

It belongs to the phenylalanyl-tRNA synthetase beta subunit family. Type 1 subfamily. In terms of assembly, tetramer of two alpha and two beta subunits. It depends on Mg(2+) as a cofactor.

Its subcellular location is the cytoplasm. It catalyses the reaction tRNA(Phe) + L-phenylalanine + ATP = L-phenylalanyl-tRNA(Phe) + AMP + diphosphate + H(+). This Deinococcus radiodurans (strain ATCC 13939 / DSM 20539 / JCM 16871 / CCUG 27074 / LMG 4051 / NBRC 15346 / NCIMB 9279 / VKM B-1422 / R1) protein is Phenylalanine--tRNA ligase beta subunit (pheT).